The primary structure comprises 349 residues: UDP-N-acetylenolpyruvoylglucosamine reductase (349 aa).

The FAD-binding PCMH-type domain occupies 25-197; sequence GIDARARYAA…VSVTFRLPKR (173 aa). Arg173 is a catalytic residue. The Proton donor role is filled by Ser249. Glu345 is an active-site residue.

This sequence belongs to the MurB family. FAD is required as a cofactor.

Its subcellular location is the cytoplasm. The catalysed reaction is UDP-N-acetyl-alpha-D-muramate + NADP(+) = UDP-N-acetyl-3-O-(1-carboxyvinyl)-alpha-D-glucosamine + NADPH + H(+). Its pathway is cell wall biogenesis; peptidoglycan biosynthesis. Its function is as follows. Cell wall formation. The sequence is that of UDP-N-acetylenolpyruvoylglucosamine reductase from Burkholderia multivorans (strain ATCC 17616 / 249).